The chain runs to 96 residues: uncharacterized protein (96 aa).

This is an uncharacterized protein from Saccharomyces cerevisiae (strain ATCC 204508 / S288c) (Baker's yeast).